A 478-amino-acid chain; its full sequence is tRNA (adenine(58)-N(1))-methyltransferase non-catalytic subunit TRM6 (478 aa).

Residues 456–478 (SENATAADSSEKLAEHGAKKQKI) are disordered. Residues 464-478 (SSEKLAEHGAKKQKI) are compositionally biased toward basic and acidic residues.

This sequence belongs to the TRM6/GCD10 family. As to quaternary structure, heterotetramer; composed of two copies of TRM6/GCD10 and two copies of TRM61/GCD14.

The protein resides in the nucleus. In terms of biological role, substrate-binding subunit of tRNA (adenine-N(1)-)-methyltransferase, which catalyzes the formation of N(1)-methyladenine at position 58 (m1A58) in initiator methionyl-tRNA. Also required for repression of GCN4 mRNA translation by the upstream open reading frames (uORFs) under conditions of amino acid sufficiency. In Saccharomyces cerevisiae (strain ATCC 204508 / S288c) (Baker's yeast), this protein is tRNA (adenine(58)-N(1))-methyltransferase non-catalytic subunit TRM6 (GCD10).